The primary structure comprises 338 residues: Bifunctional methylenetetrahydrofolate dehydrogenase/cyclohydrolase 2, mitochondrial (338 aa).

Residues 89–93 and 136–138 contribute to the substrate site; these read YVRNK and VQL. Residues 205–207 and Arg238 each bind NAD(+); that span reads GRS. 314–318 contacts substrate; that stretch reads PGGVG.

This sequence belongs to the tetrahydrofolate dehydrogenase/cyclohydrolase family. Mg(2+) is required as a cofactor. In terms of tissue distribution, widely expressed.

It is found in the mitochondrion inner membrane. The enzyme catalyses (6R)-5,10-methylene-5,6,7,8-tetrahydrofolate + NADP(+) = (6R)-5,10-methenyltetrahydrofolate + NADPH. It catalyses the reaction (6R)-5,10-methylene-5,6,7,8-tetrahydrofolate + NAD(+) = (6R)-5,10-methenyltetrahydrofolate + NADH. It carries out the reaction (6R)-5,10-methenyltetrahydrofolate + H2O = (6R)-10-formyltetrahydrofolate + H(+). The protein operates within one-carbon metabolism; tetrahydrofolate interconversion. Functionally, bifunctional mitochondrial folate-interconverting enzyme that has both NAD/NADP-dependent methylenetetrahydrofolate dehydrogenase and methenyltetrahydrofolate cyclohydrolase activities. Has no NAD/NADP-dependent methylenetetrahydrofolate dehydrogenase activity. This is Bifunctional methylenetetrahydrofolate dehydrogenase/cyclohydrolase 2, mitochondrial from Rattus norvegicus (Rat).